Reading from the N-terminus, the 532-residue chain is CTP synthase (532 aa).

Positions 1–265 (MKYIVVTGGV…DEYLMRKLNL (265 aa)) are amidoligase domain. Ser12 provides a ligand contact to CTP. Residue Ser12 coordinates UTP. ATP is bound by residues 13 to 18 (GLGKGI) and Asp70. Asp70 and Glu140 together coordinate Mg(2+). Residues 147–149 (DIE), 186–191 (KTKPTQ), and Lys222 each bind CTP. UTP contacts are provided by residues 186–191 (KTKPTQ) and Lys222. Positions 289–529 (SIAIVGKYVD…VRAALKYRRE (241 aa)) constitute a Glutamine amidotransferase type-1 domain. Gly349 lines the L-glutamine pocket. Catalysis depends on Cys376, which acts as the Nucleophile; for glutamine hydrolysis. L-glutamine contacts are provided by residues 377 to 380 (FGFQ), Glu400, and Arg457. Catalysis depends on residues His502 and Glu504.

The protein belongs to the CTP synthase family. As to quaternary structure, homotetramer.

The catalysed reaction is UTP + L-glutamine + ATP + H2O = CTP + L-glutamate + ADP + phosphate + 2 H(+). It catalyses the reaction L-glutamine + H2O = L-glutamate + NH4(+). The enzyme catalyses UTP + NH4(+) + ATP = CTP + ADP + phosphate + 2 H(+). The protein operates within pyrimidine metabolism; CTP biosynthesis via de novo pathway; CTP from UDP: step 2/2. Allosterically activated by GTP, when glutamine is the substrate; GTP has no effect on the reaction when ammonia is the substrate. The allosteric effector GTP functions by stabilizing the protein conformation that binds the tetrahedral intermediate(s) formed during glutamine hydrolysis. Inhibited by the product CTP, via allosteric rather than competitive inhibition. Functionally, catalyzes the ATP-dependent amination of UTP to CTP with either L-glutamine or ammonia as the source of nitrogen. Regulates intracellular CTP levels through interactions with the four ribonucleotide triphosphates. The polypeptide is CTP synthase (Archaeoglobus fulgidus (strain ATCC 49558 / DSM 4304 / JCM 9628 / NBRC 100126 / VC-16)).